The sequence spans 191 residues: Phosphoheptose isomerase (191 aa).

Residues 34 to 191 enclose the SIS domain; sequence IATALKDGNK…LVEEMVCERS (158 aa). 49-51 is a binding site for substrate; the sequence is NGG. Positions 58 and 62 each coordinate Zn(2+). Substrate-binding positions include Glu62, 91–92, 117–119, Ser122, and Gln169; these read ND and TTS. Zn(2+) contacts are provided by Gln169 and His177.

It belongs to the SIS family. GmhA subfamily. Zn(2+) serves as cofactor.

Its subcellular location is the cytoplasm. It carries out the reaction 2 D-sedoheptulose 7-phosphate = D-glycero-alpha-D-manno-heptose 7-phosphate + D-glycero-beta-D-manno-heptose 7-phosphate. It functions in the pathway carbohydrate biosynthesis; D-glycero-D-manno-heptose 7-phosphate biosynthesis; D-glycero-alpha-D-manno-heptose 7-phosphate and D-glycero-beta-D-manno-heptose 7-phosphate from sedoheptulose 7-phosphate: step 1/1. In terms of biological role, catalyzes the isomerization of sedoheptulose 7-phosphate in D-glycero-D-manno-heptose 7-phosphate. The sequence is that of Phosphoheptose isomerase from Aquifex aeolicus (strain VF5).